The chain runs to 159 residues: uncharacterized protein (159 aa).

This is an uncharacterized protein from Caenorhabditis elegans.